We begin with the raw amino-acid sequence, 160 residues long: Nuclear transcription factor Y subunit B-5 (160 aa).

The DNA-binding element occupies 56–62; sequence LPIANVG. The interval 83–94 is subunit association domain (SAD); that stretch reads MQECVSEFISFV.

It belongs to the NFYB/HAP3 subunit family. In terms of assembly, heterotrimeric transcription factor composed of three components, NF-YA, NF-YB and NF-YC. NF-YB and NF-YC must interact and dimerize for NF-YA association and DNA binding. Expressed in flowers and siliques.

Its subcellular location is the nucleus. Functionally, component of the NF-Y/HAP transcription factor complex. The NF-Y complex stimulates the transcription of various genes by recognizing and binding to a CCAAT motif in promoters. The sequence is that of Nuclear transcription factor Y subunit B-5 (NFYB5) from Arabidopsis thaliana (Mouse-ear cress).